The following is a 124-amino-acid chain: MADLKAFAEQLVNLTIKEVSELTEILKTEYGIELATSSSVATGVSTSVVEVREEKTSFDLILKGVGTNKLAIVKLVKELTGLGLKEAKGIVDNAPAPLKEGITRNEAETLKKSLEEAGAEIDIR.

It belongs to the bacterial ribosomal protein bL12 family. In terms of assembly, homodimer. Part of the ribosomal stalk of the 50S ribosomal subunit. Forms a multimeric L10(L12)X complex, where L10 forms an elongated spine to which 2 to 4 L12 dimers bind in a sequential fashion. Binds GTP-bound translation factors.

In terms of biological role, forms part of the ribosomal stalk which helps the ribosome interact with GTP-bound translation factors. Is thus essential for accurate translation. The chain is Large ribosomal subunit protein bL12 from Azobacteroides pseudotrichonymphae genomovar. CFP2.